Consider the following 297-residue polypeptide: Mycothiol acetyltransferase (297 aa).

N-acetyltransferase domains follow at residues 7-156 and 153-297; these read VFSD…VTIR and VTIR…PPPH. Position 38 (glutamate 38) interacts with 1D-myo-inositol 2-(L-cysteinylamino)-2-deoxy-alpha-D-glucopyranoside. 79–81 contributes to the acetyl-CoA binding site; the sequence is VVV. 3 residues coordinate 1D-myo-inositol 2-(L-cysteinylamino)-2-deoxy-alpha-D-glucopyranoside: glutamate 180, lysine 219, and glutamate 227. Acetyl-CoA-binding positions include 231-233 and 238-244; these read VGV and QGLGLGR. Tyrosine 265 contacts 1D-myo-inositol 2-(L-cysteinylamino)-2-deoxy-alpha-D-glucopyranoside. 270–275 provides a ligand contact to acetyl-CoA; the sequence is NRPALR.

This sequence belongs to the acetyltransferase family. MshD subfamily. In terms of assembly, monomer.

The enzyme catalyses 1D-myo-inositol 2-(L-cysteinylamino)-2-deoxy-alpha-D-glucopyranoside + acetyl-CoA = mycothiol + CoA + H(+). Catalyzes the transfer of acetyl from acetyl-CoA to desacetylmycothiol (Cys-GlcN-Ins) to form mycothiol. In Thermomonospora curvata (strain ATCC 19995 / DSM 43183 / JCM 3096 / KCTC 9072 / NBRC 15933 / NCIMB 10081 / Henssen B9), this protein is Mycothiol acetyltransferase.